A 1012-amino-acid polypeptide reads, in one-letter code: DTSEFDPLANKEYTEEQKQTLEQEQKEFLSQTTTPALEADDGFIVTSASSAQSTPSMSALSGNISPDSQTSDPITKAVRETIIQPQKDNLIEQILKDLAALTDRDLAEQKRKEIEEEKEKDKTLSTFFGNPANREFIDKALENPELKKKLESIEIAGYKNVHNTFSAASGYPGGFKPVQWENHVSASDLRATVVKNDAGDELCTLNETTVKTKPFTLAKQDGTQVQISSYREIDFPIKLDKADGSMHLSMVALKADGTKPSKDKAVYFTAHYEEGPNGKPQLKEISSPKPLKFAGTGDDAIAYIEHGGEIYTLAVTRGKYKEMMKEVELNQGQSVDLSQAEDIIIGQGQSKEQPLITPQQTTSSSVEPPQYKQQVPPITPTNQPLQAETSQMPQSQQVNPNLLNTATALSGSMQDLLNYVNAGLTKEIDSNKQIDLIKEAAKAILNNEKSDIAEKQANIIALAENTVNNKNLKPDAKVAGVNAVLETIKNDQNTPDLEKSKMLEATVAIVLNSENLEPKQKQQMLEKAVDVGLSLKDDASRAAAIDGIKDVVIKSNLSPEDKGTMLIAVGDKVNVSELSNAEKQKLLGSVLKKKGVEAQVLSPAQQQLMQQHLYKITAEQTKKDTIKKVNDILFDPLSNTELKTTNIQAITSNVLDGPATAEVKGEIIQEITNTVAGSSLEAQDKAAIIKGVGETIATHSDTSLSLPNKALIMASAEKGIAESQTNLPDRELMTKGLVDGIYEGKGGPEITKAVSSGIDNSNINDSEKEALKKAKDAASEAALDRDTQNLTEGFKGQNIEEHKPHDDIYNKAREVINAVNPVIEALEKFKEPVVSAEERIVQETSSILNNISKLAVEKVNNFRAMLSPTGNLKTLEEKKEESIKKVDELVKAFGTKSSTEEQQSFIKTNLIDDKTLSKEVRLQTIDKLLQEQKRAEAIENPSVKTEDVRVVSGKSKLKPISKDNPDIEKAKMVVGRDRVNIKGNIKIMGALMNARDIIQSENLNKSTPIKRE.

Disordered regions lie at residues 1 to 73 and 348 to 396; these read DTSE…TSDP and GQSK…PQSQ. A compositionally biased stretch (basic and acidic residues) spans 12–27; it reads EYTEEQKQTLEQEQKE. The span at 47–61 shows a compositional bias: low complexity; the sequence is SASSAQSTPSMSALS. 3 stretches are compositionally biased toward polar residues: residues 62 to 73, 348 to 373, and 380 to 396; these read GNISPDSQTSDP, GQSK…QYKQ, and PTNQ…PQSQ.

The protein localises to the cytoplasm. In Rickettsia slovaca, this protein is Antigenic heat-stable 120 kDa protein (sca4).